Consider the following 290-residue polypeptide: Acetylglutamate kinase (290 aa).

Residues 65 to 66 (GG), Arg87, and Asn186 each bind substrate.

The protein belongs to the acetylglutamate kinase family. ArgB subfamily.

It is found in the cytoplasm. The enzyme catalyses N-acetyl-L-glutamate + ATP = N-acetyl-L-glutamyl 5-phosphate + ADP. Its pathway is amino-acid biosynthesis; L-arginine biosynthesis; N(2)-acetyl-L-ornithine from L-glutamate: step 2/4. Catalyzes the ATP-dependent phosphorylation of N-acetyl-L-glutamate. This Mycobacterium sp. (strain KMS) protein is Acetylglutamate kinase.